Consider the following 314-residue polypeptide: Serine/threonine-protein phosphatase SIT4 (314 aa).

Mn(2+)-binding residues include D53, H55, D85, and N117. Residue H118 is the Proton donor of the active site. Positions 167 and 241 each coordinate Mn(2+).

The protein belongs to the PPP phosphatase family. PP-6 (PP-V) subfamily. In terms of assembly, interacts with MDS3. It depends on Mn(2+) as a cofactor.

It is found in the cytoplasm. The catalysed reaction is O-phospho-L-seryl-[protein] + H2O = L-seryl-[protein] + phosphate. It catalyses the reaction O-phospho-L-threonyl-[protein] + H2O = L-threonyl-[protein] + phosphate. Its function is as follows. Serine/threonine protein phosphatase which is involved in the dephosphorylation of the large subunit of RNA polymerase II. Is required in late G1 for normal G1 cyclin expression, bud initiation and expression of certain genes that are periodically expressed during late G1. Plays a role during hyphal growth through the regulation of cell wall biogenesis, osmosensing and protein translation. Involved in virulence in a mouse systemic infection model. The polypeptide is Serine/threonine-protein phosphatase SIT4 (SIT4) (Candida albicans (strain SC5314 / ATCC MYA-2876) (Yeast)).